Here is a 461-residue protein sequence, read N- to C-terminus: tRNA modification GTPase MnmE (461 aa).

(6S)-5-formyl-5,6,7,8-tetrahydrofolate is bound by residues arginine 27, glutamate 89, and arginine 128. A TrmE-type G domain is found at 224–382 (GLATAIVGQP…LEELINKLFF (159 aa)). Asparagine 234 contributes to the K(+) binding site. Residues 234 to 239 (NVGKSS), 253 to 259 (TDVAGTT), and 278 to 281 (DTAG) each bind GTP. Mg(2+) is bound at residue serine 238. Residues threonine 253, valine 255, and threonine 258 each contribute to the K(+) site. Residue threonine 259 participates in Mg(2+) binding. Lysine 461 contributes to the (6S)-5-formyl-5,6,7,8-tetrahydrofolate binding site.

It belongs to the TRAFAC class TrmE-Era-EngA-EngB-Septin-like GTPase superfamily. TrmE GTPase family. Homodimer. Heterotetramer of two MnmE and two MnmG subunits. K(+) is required as a cofactor.

The protein localises to the cytoplasm. Functionally, exhibits a very high intrinsic GTPase hydrolysis rate. Involved in the addition of a carboxymethylaminomethyl (cmnm) group at the wobble position (U34) of certain tRNAs, forming tRNA-cmnm(5)s(2)U34. The protein is tRNA modification GTPase MnmE of Lactobacillus acidophilus (strain ATCC 700396 / NCK56 / N2 / NCFM).